Here is a 450-residue protein sequence, read N- to C-terminus: MNLSYTPATICAVATAPGRGGVGVIRVSGKDLLPFAQAISGGKTPKPRYATYTDFFDAHGQALDNGLLLFFPGPNSFTGEDVIELQGHGGPVVLKMLLARCVELGARLAEPGEFTKRAFLNDKLDLAQAESVADLIDASSETAARSALKSLKGAFSREVHGLVDELINLRMLVEATLDFPEEEIDFLKQADAIGRLRRLRAQLVGVQATAKQGAILREGMHVVLVGQPNVGKSSLMNALAGDDIAIVTDIAGTTRDTVREEIVIDGVPVHIIDTAGLRDTDDVVEKIGIERTWQAVERADLALLLVDSREGLTAEVQSILERLPPALPRVQVFNKVDLSGEAAGLAEQDGHPLVRLSARTHDGVDILKAKLLEMIGYSGADEGVFLARQRHLDAIARAADHLELAEADWEQVEIFAEELRMAQNALSEITGEFSADDLLGVIFSRFCIGK.

The (6S)-5-formyl-5,6,7,8-tetrahydrofolate site is built by Arg26, Glu84, and Lys123. One can recognise a TrmE-type G domain in the interval 219–376; the sequence is GMHVVLVGQP…LKAKLLEMIG (158 aa). A K(+)-binding site is contributed by Asn229. Residues 229–234, 248–254, 273–276, and 357–359 each bind GTP; these read NVGKSS, TDIAGTT, DTAG, and SAR. Ser233 contacts Mg(2+). Residues Thr248, Ile250, and Thr253 each coordinate K(+). Residue Thr254 participates in Mg(2+) binding. Residue Lys450 participates in (6S)-5-formyl-5,6,7,8-tetrahydrofolate binding.

It belongs to the TRAFAC class TrmE-Era-EngA-EngB-Septin-like GTPase superfamily. TrmE GTPase family. Homodimer. Heterotetramer of two MnmE and two MnmG subunits. Requires K(+) as cofactor.

The protein resides in the cytoplasm. Functionally, exhibits a very high intrinsic GTPase hydrolysis rate. Involved in the addition of a carboxymethylaminomethyl (cmnm) group at the wobble position (U34) of certain tRNAs, forming tRNA-cmnm(5)s(2)U34. This chain is tRNA modification GTPase MnmE, found in Chromobacterium violaceum (strain ATCC 12472 / DSM 30191 / JCM 1249 / CCUG 213 / NBRC 12614 / NCIMB 9131 / NCTC 9757 / MK).